A 417-amino-acid chain; its full sequence is Lactose permease (417 aa).

Met1 bears the N-formylmethionine; partial mark. The Cytoplasmic portion of the chain corresponds to Met1–Thr7. Residues Asn8–Leu34 form a helical membrane-spanning segment. Residues His35–Ser41 lie on the Periplasmic side of the membrane. Residues Lys42–Leu70 form a helical membrane-spanning segment. Residues Gly71–Lys74 lie on the Cytoplasmic side of the membrane. A helical transmembrane segment spans residues Tyr75–Gln100. At Tyr101–Leu104 the chain is on the periplasmic side. Residues Val105–Ile129 form a helical membrane-spanning segment. The Cytoplasmic segment spans residues Glu130–Phe140. Residues Gly141–Thr163 traverse the membrane as a helical segment. The Periplasmic portion of the chain corresponds to Ile164–Asn166. The helical transmembrane segment at Gln167–Phe186 threads the bilayer. Over Ala187–Pro220 the chain is Cytoplasmic. A helical membrane pass occupies residues Lys221–Ser249. The Periplasmic segment spans residues Phe250 to Thr253. A helical transmembrane segment spans residues Gly254–Phe278. Residues Ala279–Gly288 are Cytoplasmic-facing. Residues Lys289 to Phe308 form a helical membrane-spanning segment. The Periplasmic segment spans residues Ala309 to Ser311. A helical transmembrane segment spans residues Ala312 to Phe334. At Lys335 to Ser346 the chain is on the cytoplasmic side. A helical transmembrane segment spans residues Ala347–Glu374. Residues Ser375 to Gly377 lie on the Periplasmic side of the membrane. The chain crosses the membrane as a helical span at residues Phe378–Phe398. Over Thr399–Ala417 the chain is Cytoplasmic.

Monomer.

It localises to the cell inner membrane. The catalysed reaction is lactose(in) + H(+)(in) = lactose(out) + H(+)(out). It carries out the reaction melibiose(in) + H(+)(in) = melibiose(out) + H(+)(out). With respect to regulation, inhibited by the proton ionophore carbonyl cyanide m-chlorophenylhydrazone (CCCP). Functionally, responsible for transport of beta-galactosides into the cell, with the concomitant import of a proton (symport system). Can transport lactose, melibiose, the synthetic disaccharide lactulose or the analog methyl-1-thio-beta,D-galactopyranoside (TMG), but not sucrose or fructose. The substrate specificity is directed toward the galactopyranosyl moiety of the substrate. The chain is Lactose permease from Escherichia coli (strain K12).